Here is a 463-residue protein sequence, read N- to C-terminus: NF-kappa-B-activating protein (463 aa).

Residues 1–14 show a composition bias toward basic residues; it reads MRSRSRSRSRQRER. The disordered stretch occupies residues 1–358; sequence MRSRSRSRSR…GGSLNQKDFG (358 aa). Basic and acidic residues-rich tracts occupy residues 15-29 and 39-71; these read RRSD…ERRT and VSRE…DAVP. Residues 78-98 show a composition bias toward low complexity; sequence SSPSRSSSSSSSDRSSSSRSP. Over residues 107–125 the composition is skewed to basic and acidic residues; the sequence is KSVERWPNDRYHENNDRRQ. Phosphoserine occurs at positions 136, 189, and 191. Residue threonine 195 is modified to Phosphothreonine. Positions 208–238 are enriched in basic residues; the sequence is PKKKKKKGKRKHKKSEKKSKKKSKKSKKKKS. Over residues 241–267 the composition is skewed to low complexity; that stretch reads ESSSSSSSSSSEDSSDESSSSSSSSSS. The span at 268-278 shows a compositional bias: acidic residues; sequence DSEDESEEEDV. A compositionally biased stretch (basic and acidic residues) spans 279–288; the sequence is WLEKTADGIK. Residues 289–312 show a composition bias toward basic residues; sequence KPKKKKSSTSKKDKKSKKKKKKRK. The segment covering 330-340 has biased composition (basic and acidic residues); the sequence is KNKESASHNDE.

Belongs to the NKAP family.

It localises to the nucleus. In terms of biological role, tumor suppressor involved in maintaining genome integrity. Influences gene expression and mRNA splicing. This is NF-kappa-B-activating protein from Drosophila melanogaster (Fruit fly).